Here is a 133-residue protein sequence, read N- to C-terminus: Small ribosomal subunit protein uS8 (133 aa).

The tract at residues 1–32 (MANHDPISDMLTRIRNASEKRHESTKVPASRM) is disordered. Basic and acidic residues predominate over residues 16 to 25 (NASEKRHEST).

It belongs to the universal ribosomal protein uS8 family. As to quaternary structure, part of the 30S ribosomal subunit. Contacts proteins S5 and S12.

In terms of biological role, one of the primary rRNA binding proteins, it binds directly to 16S rRNA central domain where it helps coordinate assembly of the platform of the 30S subunit. In Synechococcus sp. (strain CC9311), this protein is Small ribosomal subunit protein uS8.